The chain runs to 117 residues: Multidrug resistance protein EbrB (117 aa).

Transmembrane regions (helical) follow at residues 3 to 23 (GLLYLALAIVSEVFGSTMLKL), 31 to 51 (WPIAGVIVGFLSAFTFLSFSL), 59 to 79 (AYATWSGVGTALTAIVGFLLF), and 81 to 101 (ETISLKGVFGLTLVIAGVVVL).

This sequence belongs to the drug/metabolite transporter (DMT) superfamily. Small multidrug resistance (SMR) (TC 2.A.7.1) family. EbrA/EbrB subfamily. In terms of assembly, the efflux pump is composed of EbrA and EbrB.

It localises to the cell membrane. Functionally, part of a multidrug efflux pump. Confers resistance to cationic lipophilic dyes such as ethidium bromide, acriflavine, pyronine Y and safranin O. The efflux is probably coupled to an influx of protons. The polypeptide is Multidrug resistance protein EbrB (ebrB) (Bacillus subtilis (strain 168)).